Here is an 820-residue protein sequence, read N- to C-terminus: Cell division control protein 48 homolog C (820 aa).

Disordered stretches follow at residues 72-157 (RVKD…RFDL) and 169-188 (LNSS…VEVE). The span at 76–87 (EDEDDNIGDEEG) shows a compositional bias: acidic residues. The stretch at 85-122 (EEGSASQRKKQRRVDEKEEKLQRAEQSHLRKRNMERSV) forms a coiled coil. Residues 97–119 (RVDEKEEKLQRAEQSHLRKRNME) show a composition bias toward basic and acidic residues. Over residues 121-142 (SVSSSPSSSSSSEDSGDVSTSE) the composition is skewed to low complexity. ATP is bound by residues 274-281 (GPPGCGKT) and 569-576 (GPPGCGKT).

This sequence belongs to the AAA ATPase family.

Its subcellular location is the nucleus. The protein resides in the cytoplasm. It localises to the cytoskeleton. It is found in the phragmoplast. Functionally, probably functions in cell division and growth processes. Interacts with certain SNAREs as part of specialized membrane fusion events where vesicles from the same organelle fuse (homotypic fusion). The sequence is that of Cell division control protein 48 homolog C (CDC48C) from Arabidopsis thaliana (Mouse-ear cress).